Consider the following 699-residue polypeptide: Elongation factor G (699 aa).

Residues 8–288 enclose the tr-type G domain; it reads EDYRNFGIMA…AVVDYLPSPL (281 aa). Residues 17–24, 86–90, and 140–143 each bind GTP; these read AHIDAGKT, DTPGH, and NKMD.

It belongs to the TRAFAC class translation factor GTPase superfamily. Classic translation factor GTPase family. EF-G/EF-2 subfamily.

The protein localises to the cytoplasm. Catalyzes the GTP-dependent ribosomal translocation step during translation elongation. During this step, the ribosome changes from the pre-translocational (PRE) to the post-translocational (POST) state as the newly formed A-site-bound peptidyl-tRNA and P-site-bound deacylated tRNA move to the P and E sites, respectively. Catalyzes the coordinated movement of the two tRNA molecules, the mRNA and conformational changes in the ribosome. The chain is Elongation factor G from Rhizobium rhizogenes (strain K84 / ATCC BAA-868) (Agrobacterium radiobacter).